Here is a 428-residue protein sequence, read N- to C-terminus: Arabinosyltransferase RRA2 (428 aa).

Topologically, residues 1–15 (MAGRRDRIQQLRGSR) are cytoplasmic. A helical; Signal-anchor for type II membrane protein membrane pass occupies residues 16 to 36 (IAIAIFVGILIGCVCSVLFPN). The Lumenal segment spans residues 37–428 (GFFNSGSSLI…ALDSFPDGSD (392 aa)). The short motif at 250-252 (DVD) is the DXD motif element. N278 carries N-linked (GlcNAc...) asparagine glycosylation.

This sequence belongs to the glycosyltransferase 77 family. As to expression, expressed in roots, rosette and cauline leaves, stems, flowers and siliques.

It is found in the golgi apparatus membrane. Functionally, plays a role in the arabinosylation of cell wall components. Involved in the arabinosylation of extensin proteins in root hair cells. Extensins are structural glycoproteins present in cell walls and its arabinosylation is important for root hair cell development. In Arabidopsis thaliana (Mouse-ear cress), this protein is Arabinosyltransferase RRA2.